The chain runs to 51 residues: Large ribosomal subunit protein bL33 (51 aa).

It belongs to the bacterial ribosomal protein bL33 family.

In Colwellia psychrerythraea (strain 34H / ATCC BAA-681) (Vibrio psychroerythus), this protein is Large ribosomal subunit protein bL33.